A 142-amino-acid polypeptide reads, in one-letter code: Hemoglobin subunit alpha-1/2 (142 aa).

The Globin domain maps to 2–142; the sequence is VLSADDKTNI…VSTVLTSKYR (141 aa). Serine 4 is subject to Phosphoserine. Lysine 8 carries the N6-succinyllysine modification. The residue at position 9 (threonine 9) is a Phosphothreonine. N6-succinyllysine is present on lysine 12. An N6-acetyllysine; alternate modification is found at lysine 17. Lysine 17 carries the post-translational modification N6-succinyllysine; alternate. A Phosphotyrosine modification is found at tyrosine 25. Lysine 41 carries the N6-succinyllysine modification. Serine 50 bears the Phosphoserine mark. An O2-binding site is contributed by histidine 59. A heme b-binding site is contributed by histidine 88. Position 103 is a phosphoserine (serine 103). Threonine 109 is modified (phosphothreonine). Serine 125 and serine 132 each carry phosphoserine. Threonine 135 and threonine 138 each carry phosphothreonine. Serine 139 carries the post-translational modification Phosphoserine.

Belongs to the globin family. Heterotetramer of two alpha chains and two beta chains. Red blood cells.

Involved in oxygen transport from the lung to the various peripheral tissues. Functionally, hemopressin acts as an antagonist peptide of the cannabinoid receptor CNR1. Hemopressin-binding efficiently blocks cannabinoid receptor CNR1 and subsequent signaling. This Rattus norvegicus (Rat) protein is Hemoglobin subunit alpha-1/2 (Hba1).